A 586-amino-acid polypeptide reads, in one-letter code: Ezrin (586 aa).

The FERM domain occupies 2–295 (PKPINVRVTT…GNHELYMRRR (294 aa)). N6-acetyllysine is present on lysine 60. Residues 115–120 (IYCPPE) carry the [IL]-x-C-x-x-[DE] motif motif. Position 146 is a phosphotyrosine; by PDGFR (tyrosine 146). Positions 244 to 586 (EIRNISFNDK…KQRIDEFEAM (343 aa)) are interaction with SCYL3. Positions 302-462 (VQQMKAQARE…QDDLVKTKEE (161 aa)) form a coiled coil. The disordered stretch occupies residues 306–338 (KAQAREEKHQKQLERQQLETEKKRRETVEREKE). The segment covering 308–338 (QAREEKHQKQLERQQLETEKKRRETVEREKE) has biased composition (basic and acidic residues). Tyrosine 354 is subject to Phosphotyrosine; by PDGFR. Residue serine 366 is modified to Phosphoserine. The residue at position 478 (tyrosine 478) is a Phosphotyrosine. A disordered region spans residues 534-565 (LSNELSQARDENKRTHNDIIHNENMRQGRDKY). A Phosphoserine modification is found at serine 535. A compositionally biased stretch (basic and acidic residues) spans 540–565 (QARDENKRTHNDIIHNENMRQGRDKY). Phosphothreonine; by ROCK2 and PKC/PRKCI is present on threonine 567.

As to quaternary structure, interacts with PALS1 and NHERF2. Found in a complex with EZR, PODXL and NHERF2. Interacts with MCC, PLEKHG6, PODXL, SCYL3/PACE1, NHERF1 and TMEM8B. Interacts (when phosphorylated) with FES/FPS. Interacts with dimeric S100P, the interaction may be activating through unmasking of F-actin binding sites. Identified in complexes that contain VIM, EZR, AHNAK, BFSP1, BFSP2, ANK2, PLEC, PRX and spectrin. Detected in a complex composed of at least EZR, AHNAK, PPL and PRX. Interacts with PDPN (via cytoplasmic domain); activates RHOA and promotes epithelial-mesenchymal transition. Interacts with SPN/CD43 cytoplasmic tail. Interacts with CD44 and ICAM2. Interacts with SLC9A3; interaction targets SLC9A3 to the apical membrane. Interacts with SLC9A1; regulates interactions of SLC9A1 with cytoskeletal and promotes stress fiber formation. Interacts with CLIC5; may work together in a complex which also includes RDX and MYO6 to stabilize linkages between the plasma membrane and subjacent actin cytoskeleton at the base of stereocilia. Phosphorylated by tyrosine-protein kinases. Phosphorylation by ROCK2 suppresses the head-to-tail association of the N-terminal and C-terminal halves resulting in an opened conformation which is capable of actin and membrane-binding. Post-translationally, S-nitrosylation is induced by interferon-gamma and oxidatively-modified low-densitity lipoprotein (LDL(ox)) possibly implicating the iNOS-S100A8/9 transnitrosylase complex. Detected in eye lens fiber cells. Expressed in cerebrum and cerebellum (at protein level). Component of the microvilli of intestinal epithelial cells.

The protein resides in the apical cell membrane. The protein localises to the cell projection. Its subcellular location is the microvillus membrane. It localises to the ruffle membrane. It is found in the cytoplasm. The protein resides in the cell cortex. The protein localises to the cytoskeleton. Its subcellular location is the microvillus. With respect to regulation, a head-to-tail association, of the N-terminal and C-terminal halves results in a closed conformation (inactive form) which is incapable of actin or membrane-binding. In terms of biological role, probably involved in connections of major cytoskeletal structures to the plasma membrane. In epithelial cells, required for the formation of microvilli and membrane ruffles on the apical pole. Along with PLEKHG6, required for normal macropinocytosis. The chain is Ezrin (Ezr) from Mus musculus (Mouse).